A 464-amino-acid polypeptide reads, in one-letter code: ATP synthase subunit beta (464 aa).

ATP is bound at residue 152-159 (GGAGVGKS).

The protein belongs to the ATPase alpha/beta chains family. In terms of assembly, F-type ATPases have 2 components, CF(1) - the catalytic core - and CF(0) - the membrane proton channel. CF(1) has five subunits: alpha(3), beta(3), gamma(1), delta(1), epsilon(1). CF(0) has three main subunits: a(1), b(2) and c(9-12). The alpha and beta chains form an alternating ring which encloses part of the gamma chain. CF(1) is attached to CF(0) by a central stalk formed by the gamma and epsilon chains, while a peripheral stalk is formed by the delta and b chains.

It localises to the cell membrane. It carries out the reaction ATP + H2O + 4 H(+)(in) = ADP + phosphate + 5 H(+)(out). Its function is as follows. Produces ATP from ADP in the presence of a proton gradient across the membrane. The catalytic sites are hosted primarily by the beta subunits. This chain is ATP synthase subunit beta, found in Protochlamydia amoebophila (strain UWE25).